The sequence spans 256 residues: MLVLVSPAKTLDYDNPAATTEYTLPKLTQYSEQLIEECRKLTPADIASLMKVSDKIAGLNAARFESWSPRFTTGNAKQAVYAFRGDVYTGLDADSLSEDSLSRAQSQLRILSGLYGLLKPLDLMQPYRLEMGTRLANAKGTNLYQFWGDVITDEVNASLKEQGDELLVNLASNEYFKAVKPKLVNGTIITPVFKDRKNGQYKVISFFAKKARGMMVRYILDNKVSNLEELNKFDMAGYYYCEAESTAASPVFKREE.

The protein belongs to the UPF0246 family.

This is UPF0246 protein Swoo_1284 from Shewanella woodyi (strain ATCC 51908 / MS32).